The sequence spans 71 residues: Sec-independent protein translocase protein TatA (71 aa).

The helical transmembrane segment at 9-29 threads the bilayer; sequence LLLILAIVVILFGASRLPALG. Positions 43-71 are disordered; sequence FGGEDEKPTASGNGSTPTQSSSDQGSKQA. The span at 52–71 shows a compositional bias: polar residues; that stretch reads ASGNGSTPTQSSSDQGSKQA.

The protein belongs to the TatA/E family. As to quaternary structure, the Tat system comprises two distinct complexes: a TatABC complex, containing multiple copies of TatA, TatB and TatC subunits, and a separate TatA complex, containing only TatA subunits. Substrates initially bind to the TatABC complex, which probably triggers association of the separate TatA complex to form the active translocon.

The protein localises to the cell inner membrane. Its function is as follows. Part of the twin-arginine translocation (Tat) system that transports large folded proteins containing a characteristic twin-arginine motif in their signal peptide across membranes. TatA could form the protein-conducting channel of the Tat system. The polypeptide is Sec-independent protein translocase protein TatA (Anaeromyxobacter dehalogenans (strain 2CP-C)).